Here is a 226-residue protein sequence, read N- to C-terminus: Enolase-phosphatase E1 (226 aa).

This sequence belongs to the HAD-like hydrolase superfamily. MasA/MtnC family. As to quaternary structure, monomer. The cofactor is Mg(2+).

It carries out the reaction 5-methylsulfanyl-2,3-dioxopentyl phosphate + H2O = 1,2-dihydroxy-5-(methylsulfanyl)pent-1-en-3-one + phosphate. It functions in the pathway amino-acid biosynthesis; L-methionine biosynthesis via salvage pathway; L-methionine from S-methyl-5-thio-alpha-D-ribose 1-phosphate: step 3/6. It participates in amino-acid biosynthesis; L-methionine biosynthesis via salvage pathway; L-methionine from S-methyl-5-thio-alpha-D-ribose 1-phosphate: step 4/6. Functionally, bifunctional enzyme that catalyzes the enolization of 2,3-diketo-5-methylthiopentyl-1-phosphate (DK-MTP-1-P) into the intermediate 2-hydroxy-3-keto-5-methylthiopentenyl-1-phosphate (HK-MTPenyl-1-P), which is then dephosphorylated to form the acireductone 1,2-dihydroxy-3-keto-5-methylthiopentene (DHK-MTPene). The polypeptide is Enolase-phosphatase E1 (Shewanella sp. (strain W3-18-1)).